A 167-amino-acid chain; its full sequence is uncharacterized protein (167 aa).

It is found in the virion. This is an uncharacterized protein from Acanthamoeba polyphaga (Amoeba).